The chain runs to 220 residues: MTHSPDLKGSSFTLSVLHLSDNEIAKTVEFLQEKVSQAPSFFASAPLVINIAKVEGDIDFTALKQGIADAGFIPVGVTGCKDKRVQNLASEAGFAIMSASKSPTQAPAKMAPTKIVRTPVRSGQQIYAKDGDLVVLAHVSAGAEVIADGSIHIHGTLRGRAIAGASGQQEARIICHDLQAELVSIAGDYWLSDQIESEYWQKKVMISKAEESLHLETLTI.

It belongs to the MinC family. As to quaternary structure, interacts with MinD and FtsZ.

Cell division inhibitor that blocks the formation of polar Z ring septums. Rapidly oscillates between the poles of the cell to destabilize FtsZ filaments that have formed before they mature into polar Z rings. Prevents FtsZ polymerization. The polypeptide is Probable septum site-determining protein MinC (Vibrio campbellii (strain ATCC BAA-1116)).